The chain runs to 113 residues: UPF0102 protein Mfla_2283 (113 aa).

This sequence belongs to the UPF0102 family.

The polypeptide is UPF0102 protein Mfla_2283 (Methylobacillus flagellatus (strain ATCC 51484 / DSM 6875 / VKM B-1610 / KT)).